The primary structure comprises 82 residues: ATP synthase subunit c (82 aa).

Helical transmembrane passes span 7–27 (AASV…PGIG) and 57–77 (LAFM…LLFA).

Belongs to the ATPase C chain family. In terms of assembly, F-type ATPases have 2 components, F(1) - the catalytic core - and F(0) - the membrane proton channel. F(1) has five subunits: alpha(3), beta(3), gamma(1), delta(1), epsilon(1). F(0) has four main subunits: a(1), b(1), b'(1) and c(10-14). The alpha and beta chains form an alternating ring which encloses part of the gamma chain. F(1) is attached to F(0) by a central stalk formed by the gamma and epsilon chains, while a peripheral stalk is formed by the delta, b and b' chains.

The protein resides in the cellular thylakoid membrane. Functionally, f(1)F(0) ATP synthase produces ATP from ADP in the presence of a proton or sodium gradient. F-type ATPases consist of two structural domains, F(1) containing the extramembraneous catalytic core and F(0) containing the membrane proton channel, linked together by a central stalk and a peripheral stalk. During catalysis, ATP synthesis in the catalytic domain of F(1) is coupled via a rotary mechanism of the central stalk subunits to proton translocation. Key component of the F(0) channel; it plays a direct role in translocation across the membrane. A homomeric c-ring of between 10-14 subunits forms the central stalk rotor element with the F(1) delta and epsilon subunits. This chain is ATP synthase subunit c, found in Synechococcus sp. (strain RCC307).